The sequence spans 147 residues: METLTAISRWLAKQHVVTLCVQQEGELWCANAFYLFDAQKVAFYILTEEKTRHAQMSGPQAAVAGTVNGQPKTVALIRGVQFKGEIRRLEGEESDLARKAYNRRFPVARMLSAPVWEIRLDEIKFTDNTLGFGKKMIWLRSSGTEQA.

This sequence belongs to the UPF0306 family.

This chain is UPF0306 protein YhbP, found in Escherichia fergusonii (strain ATCC 35469 / DSM 13698 / CCUG 18766 / IAM 14443 / JCM 21226 / LMG 7866 / NBRC 102419 / NCTC 12128 / CDC 0568-73).